A 340-amino-acid polypeptide reads, in one-letter code: Geranylgeranyl pyrophosphate synthase atmG (340 aa).

Over residues 19–48 the composition is skewed to polar residues; it reads NLDASYPTSSSLSTEPIDTRSSSPQGSAST. A disordered region spans residues 19–51; sequence NLDASYPTSSSLSTEPIDTRSSSPQGSASTPVD. Positions 69, 72, and 101 each coordinate isopentenyl diphosphate. Mg(2+)-binding residues include Asp108 and Asp112. Arg117 lines the dimethylallyl diphosphate pocket. An isopentenyl diphosphate-binding site is contributed by Arg118. Dimethylallyl diphosphate is bound by residues Lys195, Thr196, and Gln229. Residue Asp232 coordinates Mg(2+). Dimethylallyl diphosphate contacts are provided by Asn236, Lys246, and Lys256.

The protein belongs to the FPP/GGPP synthase family. It depends on Mg(2+) as a cofactor.

The catalysed reaction is isopentenyl diphosphate + dimethylallyl diphosphate = (2E)-geranyl diphosphate + diphosphate. The enzyme catalyses isopentenyl diphosphate + (2E)-geranyl diphosphate = (2E,6E)-farnesyl diphosphate + diphosphate. It catalyses the reaction isopentenyl diphosphate + (2E,6E)-farnesyl diphosphate = (2E,6E,10E)-geranylgeranyl diphosphate + diphosphate. Functionally, geranylgeranyl pyrophosphate synthase; part of the ATM1 gene cluster that mediates the biosynthesis of aflatrem, a tremorgenic mycotoxin with acute neurotoxic effects. Synthesis of geranylgeranyl diphosphate (GGPP) by AtmG (a GGPP synthase) precedes condensation of GGPP with indole 3-glycerol phosphate, followed by epoxidation and cyclization by AtmM (a FAD-dependent monooxygenase) and AtmC (a prenyltransferase) to produce paspaline. AtmB is also essential for paspaline production, but its exact role has not been identified yet. AtmP, a cytochrome P450 monooxygenase, subsequently converts paspaline to 13-desoxypaxilline via PC-M6 by removal of the C-30 methyl group and oxidation at C-10. AtmQ, a cytochrome P450 monooxygenase, then catalyzes the oxidation of 13-desoxypaxilline, first at C-7 to produce paspalicine and then at C-13 to form paspalinine. Finally, AtmD prenylates paspalinine to form aflatrem. The sequence is that of Geranylgeranyl pyrophosphate synthase atmG from Aspergillus flavus.